A 154-amino-acid polypeptide reads, in one-letter code: Superoxide dismutase [Cu-Zn] (154 aa).

Cu cation-binding residues include H47, H49, and H64. A disulfide bridge links C58 with C147. 4 residues coordinate Zn(2+): H64, H72, H81, and D84. H121 contacts Cu cation. R144 serves as a coordination point for substrate.

Belongs to the Cu-Zn superoxide dismutase family. Homodimer. It depends on Cu cation as a cofactor. Requires Zn(2+) as cofactor.

The protein localises to the cytoplasm. The catalysed reaction is 2 superoxide + 2 H(+) = H2O2 + O2. In terms of biological role, destroys radicals which are normally produced within the cells and which are toxic to biological systems. The polypeptide is Superoxide dismutase [Cu-Zn] (SOD1) (Podospora anserina (Pleurage anserina)).